A 662-amino-acid polypeptide reads, in one-letter code: Acetyl-coenzyme A synthetase (662 aa).

Residues 197–200 and Thr317 each bind CoA; that span reads RKGK. ATP is bound by residues 393–395, 417–422, Asp510, and Arg525; these read GEP and DTWWQT. CoA is bound at residue Ser533. Residue Arg536 participates in ATP binding. Residues His549 and Val552 each coordinate Mg(2+). The residue at position 623 (Lys623) is an N6-acetyllysine.

It belongs to the ATP-dependent AMP-binding enzyme family. The cofactor is Mg(2+). Acetylated. Deacetylation by the SIR2-homolog deacetylase activates the enzyme.

It catalyses the reaction acetate + ATP + CoA = acetyl-CoA + AMP + diphosphate. Functionally, catalyzes the conversion of acetate into acetyl-CoA (AcCoA), an essential intermediate at the junction of anabolic and catabolic pathways. AcsA undergoes a two-step reaction. In the first half reaction, AcsA combines acetate with ATP to form acetyl-adenylate (AcAMP) intermediate. In the second half reaction, it can then transfer the acetyl group from AcAMP to the sulfhydryl group of CoA, forming the product AcCoA. The polypeptide is Acetyl-coenzyme A synthetase (Helicobacter acinonychis (strain Sheeba)).